We begin with the raw amino-acid sequence, 2772 residues long: Protein DDB_G0276689 (2772 aa).

Disordered regions lie at residues 50–82, 371–415, 475–514, 612–650, 685–708, and 933–982; these read QQLK…NNNN, NLET…NGKS, LDIN…KNNL, NKNN…NNNE, LRGS…DSSL, and LVNN…NNSN. Low complexity-rich tracts occupy residues 376-412, 478-514, 614-649, and 688-708; these read NNNN…NNNN, NSKN…KNNL, and SFSP…DSSL. An LRR 1 repeat occupies 1065–1089; it reads LSKWILNLDDNNYNHIPFMSLVLMP. Positions 1282–1319 are disordered; the sequence is NNNNIDNNNNNNNNNNNNNNNNNNNNNNNNNNNNNNNN. 2 LRR repeats span residues 1393-1416 and 1543-1567; these read LSNL…TPKN and HKDV…SFSN. Over residues 1587–1619 the composition is skewed to low complexity; that stretch reads QNNNYNNNNYNNNYNNNNNNNNNNNNNNNNNNN. The segment at 1587-1622 is disordered; that stretch reads QNNNYNNNNYNNNYNNNNNNNNNNNNNNNNNNNIDN. One copy of the LRR 4 repeat lies at 1899-1922; the sequence is LEELTKQEIGYQVLLVLPTDLQVE. 2 stretches are compositionally biased toward polar residues: residues 1999-2011 and 2073-2083; these read YVSN…NDQI and LNIVHSTSPNS. 3 disordered regions span residues 1999-2021, 2054-2083, and 2367-2386; these read YVSN…KDKK, EISN…SPNS, and NNSS…NNNN. The LRR 5 repeat unit spans residues 2414 to 2439; sequence TTIINNIEMDKNRLDEAIYYLKKYGN.

This chain is Protein DDB_G0276689, found in Dictyostelium discoideum (Social amoeba).